The following is a 506-amino-acid chain: Galactose/methyl galactoside import ATP-binding protein MglA (506 aa).

ABC transporter domains follow at residues 14–249 (LEMS…VGRS) and 264–506 (VILE…SLHL). 46-53 (GENGAGKS) serves as a coordination point for ATP.

The protein belongs to the ABC transporter superfamily. Galactose/methyl galactoside importer (TC 3.A.1.2.3) family. In terms of assembly, the complex is composed of one ATP-binding protein (MglA), two transmembrane proteins (MglC) and a solute-binding protein (MglB).

The protein localises to the cell inner membrane. The enzyme catalyses D-galactose(out) + ATP + H2O = D-galactose(in) + ADP + phosphate + H(+). It catalyses the reaction methyl beta-D-galactoside(out) + ATP + H2O = methyl beta-D-galactoside(in) + ADP + phosphate + H(+). Its function is as follows. Part of the ABC transporter complex MglABC involved in galactose/methyl galactoside import. Responsible for energy coupling to the transport system. This chain is Galactose/methyl galactoside import ATP-binding protein MglA, found in Shigella boydii serotype 4 (strain Sb227).